A 466-amino-acid chain; its full sequence is 3-isopropylmalate dehydratase large subunit (466 aa).

The [4Fe-4S] cluster site is built by Cys347, Cys407, and Cys410.

This sequence belongs to the aconitase/IPM isomerase family. LeuC type 1 subfamily. As to quaternary structure, heterodimer of LeuC and LeuD. The cofactor is [4Fe-4S] cluster.

It catalyses the reaction (2R,3S)-3-isopropylmalate = (2S)-2-isopropylmalate. The protein operates within amino-acid biosynthesis; L-leucine biosynthesis; L-leucine from 3-methyl-2-oxobutanoate: step 2/4. Its function is as follows. Catalyzes the isomerization between 2-isopropylmalate and 3-isopropylmalate, via the formation of 2-isopropylmaleate. The polypeptide is 3-isopropylmalate dehydratase large subunit (Citrobacter koseri (strain ATCC BAA-895 / CDC 4225-83 / SGSC4696)).